The following is a 596-amino-acid chain: Nodulation outer protein X (596 aa).

The protein localises to the secreted. The protein is Nodulation outer protein X (nopX) of Sinorhizobium fredii (strain NBRC 101917 / NGR234).